The chain runs to 220 residues: MSESCIDFRKAKFLISAPDIAHLNEHLPGDAGVEIAFAGRSNAGKSSALNLLTDQKSLARTSRTPGRTQLINIFELDENRRLVDLPGYGFAQVPLALKKKWQESLGEYLQERQCLGGMVVLMDIRHPLKDLDMQMIAWALESEIPVLALLTKADKLKQSERMKMVNEVRKHLGDFDDRVKVEPFSSLKGIGKAKVLGILNEWCHPQWLTDAIADAETEEE.

Residues 31–205 (AGVEIAFAGR…LGILNEWCHP (175 aa)) enclose the EngB-type G domain. GTP is bound by residues 39–46 (GRSNAGKS), 66–70 (GRTQL), 84–87 (DLPG), 151–154 (TKAD), and 184–186 (FSS). 2 residues coordinate Mg(2+): Ser46 and Thr68.

It belongs to the TRAFAC class TrmE-Era-EngA-EngB-Septin-like GTPase superfamily. EngB GTPase family. Mg(2+) serves as cofactor.

Functionally, necessary for normal cell division and for the maintenance of normal septation. The chain is Probable GTP-binding protein EngB from Shewanella sediminis (strain HAW-EB3).